The primary structure comprises 148 residues: Protein E6 (148 aa).

Zinc fingers lie at residues 29–65 and 102–138; these read CVFC…CARC and CYMC…CLYC.

Belongs to the papillomaviridae E6 protein family. In terms of assembly, forms homodimers. Interacts with ubiquitin-protein ligase UBE3A/E6-AP; this interaction stimulates UBE3A ubiquitin activity. Interacts with host TP53 and EP300; this interaction inhibits TP53 activity.

The protein localises to the host cytoplasm. It localises to the host nucleus. Functionally, plays a major role in the induction and maintenance of cellular transformation. E6 associates with host UBE3A/E6-AP ubiquitin-protein ligase and modulates its activity. Sequesters tumor suppressor TP53 in the host cytoplasm and modulates its activity by interacting with host EP300 that results in the reduction of TP53 acetylation and activation. In turn, apoptosis induced by DNA damage is inhibited. E6 also protects host keratinocytes from apoptosis by mediating the degradation of host BAK1. May also inhibit host immune response. In Homo sapiens (Human), this protein is Protein E6.